A 653-amino-acid chain; its full sequence is Chaperone protein dnaK3 (653 aa).

Thr-197 carries the post-translational modification Phosphothreonine; by autocatalysis.

This sequence belongs to the heat shock protein 70 family.

Functionally, acts as a chaperone. The sequence is that of Chaperone protein dnaK3 (dnaK3) from Nostoc sp. (strain PCC 7120 / SAG 25.82 / UTEX 2576).